Reading from the N-terminus, the 123-residue chain is MDLAGICSSFQSDLDFCPDCGSVLPLPGVQDAVACTRCGFSINVRDFEGKVVKTSVVFNKLGTAMPLSMEEGPEFQGPVVDRRCSRCGHEGMAYHTRQMRSADEGQTVFYTCTNCKFQEKEDS.

Zn(2+) contacts are provided by Cys-17, Cys-20, Cys-35, Cys-38, Cys-84, and Cys-87. The C4-type zinc-finger motif lies at 17-38 (CPDCGSVLPLPGVQDAVACTRC). The segment at 80-120 (VDRRCSRCGHEGMAYHTRQMRSADEGQTVFYTCTNCKFQEK) adopts a TFIIS-type zinc-finger fold. The Hairpin signature appears at 103 to 104 (DE). Zn(2+) contacts are provided by Cys-112 and Cys-115.

It belongs to the archaeal RpoM/eukaryotic RPA12/RPB9/RPC11 RNA polymerase family. In terms of assembly, component of the RNA polymerase I (Pol I) complex consisting of at least 13 subunits.

It is found in the nucleus. Its subcellular location is the nucleolus. Functionally, core component of RNA polymerase I (Pol I), a DNA-dependent RNA polymerase which synthesizes ribosomal RNA precursors using the four ribonucleoside triphosphates as substrates. Can mediate Pol I proofreading of the nascent RNA transcript. Anchors into the Pol I active site to monitor transcription fidelity and cleave mis-incorporated 5'-ribonucleotides. This is DNA-directed RNA polymerase I subunit RPA12 from Bos taurus (Bovine).